A 287-amino-acid chain; its full sequence is Inorganic pyrophosphatase (287 aa).

Threonine 65 carries the phosphothreonine modification. A diphosphate-binding site is contributed by arginine 79. The Proton donor role is filled by tyrosine 90. Residues aspartate 116, aspartate 121, and aspartate 153 each coordinate Mg(2+). A Glycyl lysine isopeptide (Lys-Gly) (interchain with G-Cter in ubiquitin) cross-link involves residue lysine 239. At threonine 251 the chain carries Phosphothreonine. Serine 266 is modified (phosphoserine). Residue lysine 279 forms a Glycyl lysine isopeptide (Lys-Gly) (interchain with G-Cter in ubiquitin) linkage. Residue serine 286 is modified to Phosphoserine.

Belongs to the PPase family. As to quaternary structure, homodimer. Mg(2+) serves as cofactor.

It is found in the cytoplasm. The catalysed reaction is diphosphate + H2O = 2 phosphate + H(+). This chain is Inorganic pyrophosphatase (IPP1), found in Saccharomyces cerevisiae (strain ATCC 204508 / S288c) (Baker's yeast).